Here is a 203-residue protein sequence, read N- to C-terminus: Imidazoleglycerol-phosphate dehydratase (203 aa).

The protein belongs to the imidazoleglycerol-phosphate dehydratase family.

The protein localises to the cytoplasm. It catalyses the reaction D-erythro-1-(imidazol-4-yl)glycerol 3-phosphate = 3-(imidazol-4-yl)-2-oxopropyl phosphate + H2O. It participates in amino-acid biosynthesis; L-histidine biosynthesis; L-histidine from 5-phospho-alpha-D-ribose 1-diphosphate: step 6/9. The chain is Imidazoleglycerol-phosphate dehydratase from Helicobacter hepaticus (strain ATCC 51449 / 3B1).